The chain runs to 724 residues: WW domain-containing protein ZK1098.1 (724 aa).

WW domains follow at residues 78-111 and 123-156; these read PSVE…KPDV and QPQQ…KPDG. FF domains are found at residues 224–282, 295–349, 353–422, 442–502, 507–562, and 578–632; these read KKRQ…WKVQ, IKKS…CIDF, RDKE…HIKQ, QRKV…FVED, YTED…LIEK, and KRRL…YKNG. The disordered stretch occupies residues 626 to 724; it reads FNHYKNGTSG…KRKRRESEAD (99 aa). The span at 630 to 639 shows a compositional bias: polar residues; that stretch reads KNGTSGTTAG. Residues 645–657 show a composition bias toward basic residues; that stretch reads KKKKKKDKKKKNK. A compositionally biased stretch (basic and acidic residues) spans 681–692; the sequence is SKEDRMDDEERG. The span at 693 to 703 shows a compositional bias: basic residues; it reads KKSKKSRKRSP.

This is WW domain-containing protein ZK1098.1 from Caenorhabditis elegans.